The following is a 504-amino-acid chain: MELNNKEDSPRHTVPFVRQITEDGKAKLEIYRPTTNPIYIYTQILAAIAVSMGSMVVGFASAYTSPALVSMQNTTITSFKVTEQEASWVGGIMPLAGLAGGIAGGPFIEYLGRKNTILATAVPFIVAWLLIAFANSIWMVLAGRALSGFCVGIASLSLPVYLGETVQPEVRGTLGLLPTAFGNIGILICFVAGKYVNWSGLAFIGSILPIPFMVLTLLIPETPRWFVTRGREERARKALQWLRGKKADVEPELKGIVKSHCEAERHASQNAIFDLMKRSNLKPLLIALGLMFFQQLSGINAVIFYTVSIFKDAGSTIDENLCTIIVGVVNFGATFFATVLIDRLGRKILLYISEVAMVITLLTLGTFFYYKNSGNDVSNIGWLPLASFVIYVIGFSSGVGPIPWLMLGEILPGKIRGSAASVATGFNWTCTFIVTKTFADIVAAIGNHGAFWFFGVICLIGLFFVIFFVPETQGKSLEEIERKMMGRVRRMSSVANMKPLSFNM.

The Cytoplasmic segment spans residues M1 to Y39. The helical transmembrane segment at I40 to A60 threads the bilayer. The Extracellular portion of the chain corresponds to S61–S87. N-linked (GlcNAc...) asparagine glycosylation is present at N73. A helical transmembrane segment spans residues W88 to I108. The Cytoplasmic segment spans residues E109–T120. Residues A121–L141 form a helical membrane-spanning segment. Topologically, residues A142–A145 are extracellular. A helical membrane pass occupies residues L146–V166. Topologically, residues Q167–R171 are cytoplasmic. A helical transmembrane segment spans residues G172 to A192. Residues G193 to S199 lie on the Extracellular side of the membrane. The N-linked (GlcNAc...) asparagine glycan is linked to N197. The chain crosses the membrane as a helical span at residues G200 to P220. Topologically, residues E221 to P283 are cytoplasmic. The helical transmembrane segment at L284 to F304 threads the bilayer. The Extracellular segment spans residues Y305–N320. Residues L321–I341 form a helical membrane-spanning segment. The Cytoplasmic segment spans residues D342–K347. A helical membrane pass occupies residues I348–F368. Residues Y369–S387 lie on the Extracellular side of the membrane. The chain crosses the membrane as a helical span at residues F388–G408. The Cytoplasmic portion of the chain corresponds to E409–T424. The chain crosses the membrane as a helical span at residues G425–I445. Residues G446–H448 lie on the Extracellular side of the membrane. The chain crosses the membrane as a helical span at residues G449–V469. Topologically, residues P470 to M504 are cytoplasmic.

It belongs to the major facilitator superfamily. Sugar transporter (TC 2.A.1.1) family. Trehalose transporter subfamily. Highest expression in the fat body. Not expressed in other tissues including the midgut, muscle, and integuments after 24 hours of dehydration.

Its subcellular location is the cell membrane. Functionally, high-capacity facilitative transporter for trehalose, required to induce anhydrobiosis. Anhydrobiotic larvae can survive almost complete dehydration. Does not transport maltose, sucrose or lactose. Mediates the bidirectional transfer of trehalose. Responsible for the transport of trehalose synthesized in the fat body and the incorporation of trehalose into other tissues that require a carbon source, thereby regulating trehalose levels in the hemolymph. This is Facilitated trehalose transporter Tret1 from Polypedilum vanderplanki (Sleeping chironomid midge).